We begin with the raw amino-acid sequence, 476 residues long: Splicing factor ESS-2 homolog (476 aa).

The residue at position 1 (M1) is an N-acetylmethionine. Residues 1–18 (METPGASASSLLLPAASR) show a composition bias toward low complexity. Disordered regions lie at residues 1-36 (METPGASASSLLLPAASRPPRKREAGEAGAATSKQR) and 91-148 (LGKM…LPSL). T3 is subject to Phosphothreonine. Acidic residues predominate over residues 133–142 (DGEAGEEEEK). Residue K142 forms a Glycyl lysine isopeptide (Lys-Gly) (interchain with G-Cter in SUMO2) linkage. The residue at position 292 (S292) is a Phosphoserine. A Phosphothreonine modification is found at T386. 2 positions are modified to phosphoserine: S391 and S395. The disordered stretch occupies residues 413–465 (ALRASYTPSPARSTHLKTPASGLQTPTSTPAPGSATRTPLTQDPASITDNLLQ). Positions 437 to 451 (TPTSTPAPGSATRTP) are enriched in low complexity. A compositionally biased stretch (polar residues) spans 452-463 (LTQDPASITDNL).

The protein belongs to the ESS2 family. In terms of assembly, identified in the spliceosome C complex. Interacts with FRA10AC1. As to expression, highly expressed in heart, brain and skeletal muscle. Detected at low levels in placenta.

Its subcellular location is the nucleus. Its function is as follows. May be involved in pre-mRNA splicing. In Homo sapiens (Human), this protein is Splicing factor ESS-2 homolog.